Consider the following 371-residue polypeptide: Anhydro-N-acetylmuramic acid kinase (371 aa).

9 to 16 (GTSLDAVD) lines the ATP pocket.

The protein belongs to the anhydro-N-acetylmuramic acid kinase family.

The catalysed reaction is 1,6-anhydro-N-acetyl-beta-muramate + ATP + H2O = N-acetyl-D-muramate 6-phosphate + ADP + H(+). The protein operates within amino-sugar metabolism; 1,6-anhydro-N-acetylmuramate degradation. Its pathway is cell wall biogenesis; peptidoglycan recycling. Functionally, catalyzes the specific phosphorylation of 1,6-anhydro-N-acetylmuramic acid (anhMurNAc) with the simultaneous cleavage of the 1,6-anhydro ring, generating MurNAc-6-P. Is required for the utilization of anhMurNAc either imported from the medium or derived from its own cell wall murein, and thus plays a role in cell wall recycling. The chain is Anhydro-N-acetylmuramic acid kinase from Caulobacter vibrioides (strain ATCC 19089 / CIP 103742 / CB 15) (Caulobacter crescentus).